The chain runs to 120 residues: NAD(P)H-quinone oxidoreductase subunit 3 (120 aa).

Transmembrane regions (helical) follow at residues 6-26, 64-84, and 89-109; these read GYDA…LALV, MFAL…PWAV, and LGLL…VALA.

It belongs to the complex I subunit 3 family. In terms of assembly, NDH-1 can be composed of about 15 different subunits; different subcomplexes with different compositions have been identified which probably have different functions.

Its subcellular location is the cellular thylakoid membrane. The catalysed reaction is a plastoquinone + NADH + (n+1) H(+)(in) = a plastoquinol + NAD(+) + n H(+)(out). It catalyses the reaction a plastoquinone + NADPH + (n+1) H(+)(in) = a plastoquinol + NADP(+) + n H(+)(out). Functionally, NDH-1 shuttles electrons from an unknown electron donor, via FMN and iron-sulfur (Fe-S) centers, to quinones in the respiratory and/or the photosynthetic chain. The immediate electron acceptor for the enzyme in this species is believed to be plastoquinone. Couples the redox reaction to proton translocation, and thus conserves the redox energy in a proton gradient. Cyanobacterial NDH-1 also plays a role in inorganic carbon-concentration. The protein is NAD(P)H-quinone oxidoreductase subunit 3 of Synechococcus sp. (strain WH7803).